The chain runs to 448 residues: DNA repair protein RadA (448 aa).

Residues 10 to 27 (CQHCGFTSPKWLGKCVQC) form a C4-type zinc finger. An ATP-binding site is contributed by 96 to 103 (GSPGVGKS). The RadA KNRFG motif motif lies at 253–257 (KNRFG). Residues 351–448 (DVFINVSGGI…NAVGKIVEWM (98 aa)) are lon-protease-like.

The protein belongs to the RecA family. RadA subfamily.

DNA-dependent ATPase involved in processing of recombination intermediates, plays a role in repairing DNA breaks. Stimulates the branch migration of RecA-mediated strand transfer reactions, allowing the 3' invading strand to extend heteroduplex DNA faster. Binds ssDNA in the presence of ADP but not other nucleotides, has ATPase activity that is stimulated by ssDNA and various branched DNA structures, but inhibited by SSB. Does not have RecA's homology-searching function. The sequence is that of DNA repair protein RadA from Helicobacter pylori (strain ATCC 700392 / 26695) (Campylobacter pylori).